Here is a 142-residue protein sequence, read N- to C-terminus: Putative pre-16S rRNA nuclease (142 aa).

It belongs to the YqgF nuclease family.

The protein resides in the cytoplasm. Its function is as follows. Could be a nuclease involved in processing of the 5'-end of pre-16S rRNA. The chain is Putative pre-16S rRNA nuclease from Lactobacillus delbrueckii subsp. bulgaricus (strain ATCC BAA-365 / Lb-18).